Reading from the N-terminus, the 175-residue chain is UPF0398 protein SUB1405 (175 aa).

This sequence belongs to the UPF0398 family.

The protein is UPF0398 protein SUB1405 of Streptococcus uberis (strain ATCC BAA-854 / 0140J).